Consider the following 599-residue polypeptide: Glutamine--fructose-6-phosphate aminotransferase [isomerizing] (599 aa).

The Nucleophile; for GATase activity role is filled by C2. The region spanning 2-223 is the Glutamine amidotransferase type-2 domain; it reads CGIIGYIGNE…DRDIVILRKE (222 aa). SIS domains are found at residues 286–423 and 452–589; these read LGKE…IIGK and IAEE…VDKP. The active-site For Fru-6P isomerization activity is the K594.

In terms of assembly, homodimer.

The protein resides in the cytoplasm. The catalysed reaction is D-fructose 6-phosphate + L-glutamine = D-glucosamine 6-phosphate + L-glutamate. Functionally, catalyzes the first step in hexosamine metabolism, converting fructose-6P into glucosamine-6P using glutamine as a nitrogen source. The protein is Glutamine--fructose-6-phosphate aminotransferase [isomerizing] (glmS) of Methanococcus maripaludis (strain DSM 14266 / JCM 13030 / NBRC 101832 / S2 / LL).